The following is a 431-amino-acid chain: UDP-N-acetylglucosamine 1-carboxyvinyltransferase (431 aa).

Residue 22–23 (KN) coordinates phosphoenolpyruvate. Residue Arg-102 coordinates UDP-N-acetyl-alpha-D-glucosamine. Cys-126 (proton donor) is an active-site residue. Cys-126 is modified (2-(S-cysteinyl)pyruvic acid O-phosphothioketal). The UDP-N-acetyl-alpha-D-glucosamine site is built by Asp-318 and Ile-340.

This sequence belongs to the EPSP synthase family. MurA subfamily.

The protein resides in the cytoplasm. The enzyme catalyses phosphoenolpyruvate + UDP-N-acetyl-alpha-D-glucosamine = UDP-N-acetyl-3-O-(1-carboxyvinyl)-alpha-D-glucosamine + phosphate. It participates in cell wall biogenesis; peptidoglycan biosynthesis. Cell wall formation. Adds enolpyruvyl to UDP-N-acetylglucosamine. The protein is UDP-N-acetylglucosamine 1-carboxyvinyltransferase of Bartonella tribocorum (strain CIP 105476 / IBS 506).